The chain runs to 85 residues: UPF0386 protein TM1040_0419 (85 aa).

The disordered stretch occupies residues 62-85 (SKSSRPYQISEKGRRSVRAQLDNR).

It belongs to the UPF0386 family.

The sequence is that of UPF0386 protein TM1040_0419 from Ruegeria sp. (strain TM1040) (Silicibacter sp.).